The chain runs to 44 residues: uncharacterized protein (44 aa).

A signal peptide spans 1–28 (MLRDLGRRVAIAAILSGIILGGMSISLA).

This is an uncharacterized protein from Bacillus subtilis (strain 168).